Reading from the N-terminus, the 1178-residue chain is Thrombospondin-2 (1178 aa).

The signal sequence occupies residues 1–22; it reads MLQRSRLLWLAVFITLWVSSDA. One can recognise a Laminin G-like domain in the interval 25 to 221; the sequence is DAKEEENTFD…LQNIHLIFDT (197 aa). Asn-157, Asn-244, Asn-317, and Asn-322 each carry an N-linked (GlcNAc...) asparagine glycan. A VWFC domain is found at 324–381; it reads SVCWQDGRVFADSESWIVDSCTKCTCQDSKIVCHQITCPPVSCADPSFIEGECCPVCS. TSP type-1 domains are found at residues 387 to 437, 443 to 498, and 500 to 555; these read EEGW…KKCD, DGGW…APCP, and NGQW…RDCP. 27 cysteine pairs are disulfide-bonded: Cys-399-Cys-431, Cys-403-Cys-436, Cys-414-Cys-421, Cys-455-Cys-492, Cys-459-Cys-497, Cys-470-Cys-482, Cys-512-Cys-549, Cys-516-Cys-554, Cys-527-Cys-539, Cys-559-Cys-570, Cys-564-Cys-580, Cys-583-Cys-594, Cys-600-Cys-616, Cys-607-Cys-625, Cys-628-Cys-652, Cys-658-Cys-671, Cys-665-Cys-684, Cys-686-Cys-697, Cys-713-Cys-721, Cys-726-Cys-746, Cys-762-Cys-782, Cys-785-Cys-805, Cys-821-Cys-841, Cys-844-Cys-864, Cys-882-Cys-902, Cys-918-Cys-938, and Cys-954-Cys-1175. An N-linked (GlcNAc...) asparagine glycan is attached at Asn-463. Positions 555 to 595 constitute an EGF-like 1 domain; the sequence is PIDGCLSNPCFPGAECNSYPDGSWSCGPCPAGFLGNGTVCE. Asn-590 is a glycosylation site (N-linked (GlcNAc...) asparagine). The region spanning 654–698 is the EGF-like 2 domain; it reads PENPCKDKTHSCHKSAECIYLGHFSDPMYKCECRTGYAGDGRICG. TSP type-3 repeat units lie at residues 699 to 734, 735 to 770, 771 to 793, 794 to 829, 830 to 852, 853 to 890, 891 to 926, and 927 to 962; these read EDSD…NSGQ, EDFD…NPRQ, FDYD…NPAQ, IDTD…NTDQ, SDTD…NPDQ, TDAD…NANQ, ADHD…NPEQ, and EDSD…AISE. N-linked (GlcNAc...) asparagine glycosylation is present at Asn-716. Residues 737-760 are disordered; sequence FDKDGKGDACDEDDDNDGVEDDKD. A compositionally biased stretch (acidic residues) spans 746–759; sequence CDEDDDNDGVEDDK. A disordered region spans residues 852 to 941; sequence QTDADNDLVG…DGRGDICKDD (90 aa). Residues 853 to 872 are compositionally biased toward acidic residues; it reads TDADNDLVGDQCDNNEDIDE. Residues 891-901 are compositionally biased toward basic and acidic residues; the sequence is ADHDKDGKGDA. Positions 902–911 are enriched in acidic residues; the sequence is CDPDDDNDGI. Composition is skewed to basic and acidic residues over residues 912–924 and 931–940; these read PDDR…RYNP and GDGRGDICKD. The short motif at 934–936 is the Cell attachment site element; that stretch reads RGD. A TSP C-terminal domain is found at 966–1178; the sequence is RKFQMVPLDP…SDLKYECRDA (213 aa). A glycan (N-linked (GlcNAc...) asparagine) is linked at Asn-1075.

The protein belongs to the thrombospondin family. Homotrimer; disulfide-linked. Can bind to fibrinogen, fibronectin, laminin and type V collagen.

Functionally, adhesive glycoprotein that mediates cell-to-cell and cell-to-matrix interactions. This chain is Thrombospondin-2 (THBS2), found in Gallus gallus (Chicken).